The following is a 604-amino-acid chain: Beta-alanine transporter (604 aa).

The Cytoplasmic portion of the chain corresponds to 1 to 23; the sequence is MDFDEVLREVGSFGLYQKVIICS. A helical membrane pass occupies residues 24–44; the sequence is VLLPAALPCAFHAYSQLFIAA. The Extracellular portion of the chain corresponds to 45-151; that stretch reads TPQHFCRVPE…QEWNLVCDRS (107 aa). Asparagine 68 and asparagine 88 each carry an N-linked (GlcNAc...) asparagine glycan. The helical transmembrane segment at 152 to 172 threads the bilayer; the sequence is FLVTLALVVFGVGGLLGNYVF. The Cytoplasmic segment spans residues 173–182; it reads GYLVDLWGRR. Residues 183 to 203 traverse the membrane as a helical segment; sequence PSFYAYLLLEIIACAASAFAW. Topologically, residues 204–212 are extracellular; the sequence is NYYTWLGLR. Residues 213–233 traverse the membrane as a helical segment; that stretch reads FVVGLTVPAILASPYVLAIEL. Over 234–243 the chain is Cytoplasmic; that stretch reads VGPERRVFCT. The chain crosses the membrane as a helical span at residues 244–264; sequence IVSNIAYSLGLVVLAGVIYIV. The Extracellular segment spans residues 265 to 268; the sequence is RDWR. The chain crosses the membrane as a helical span at residues 269–289; the sequence is ELSLAVSMPLLMLFSCFFVLP. The Cytoplasmic portion of the chain corresponds to 290–362; sequence ESPRWLMAVG…FRGPNMRRKT (73 aa). The chain crosses the membrane as a helical span at residues 363-383; that stretch reads LIITLIWFANTSVYVGLSYYA. Residues 384–390 lie on the Extracellular side of the membrane; the sequence is PALGGDE. The chain crosses the membrane as a helical span at residues 391–411; the sequence is IWNFFLAGAVELPTYLLLWPG. Topologically, residues 412–418 are cytoplasmic; that stretch reads LSYFGRR. Residues 419–439 form a helical membrane-spanning segment; it reads WILFISMLVGGVACVATFLYP. At 440-442 the chain is on the extracellular side; that stretch reads DIT. A helical membrane pass occupies residues 443–463; the sequence is LLLYCVGKMGISSSFVVLPLM. The Cytoplasmic segment spans residues 464 to 473; that stretch reads ASELYPTVVR. The chain crosses the membrane as a helical span at residues 474–494; that stretch reads GLGMSFSSVISMVGPIVIPMI. The Extracellular segment spans residues 495–501; the sequence is NHMGQQM. The chain crosses the membrane as a helical span at residues 502–522; the sequence is LVLPLIVMGALLILGGFASLL. The Cytoplasmic segment spans residues 523 to 604; the sequence is LPETRNRNLP…SICKNEMRTL (82 aa).

The protein belongs to the major facilitator (TC 2.A.1) superfamily. Organic cation transporter (TC 2.A.1.19) family. As to expression, expressed in the head and predominantly in the retinal pigment cells of the compound eye.

It localises to the cell membrane. In terms of biological role, beta-alanine transporter required for the uptake of beta-alanine by the glia. Required for the recycling process of the neurotransmitter histamine in photoreceptor neurons of the compound eye and therefore for photoreceptor synaptic transmission. Following histamine release from photoreceptors and its uptake by glia, histamine is conjugated to beta-alanine by e/Ebony to form the inactive metabolite, carcinine. The chain is Beta-alanine transporter from Drosophila melanogaster (Fruit fly).